The sequence spans 54 residues: Large ribosomal subunit protein bL33A (54 aa).

The protein belongs to the bacterial ribosomal protein bL33 family.

This Streptomyces avermitilis (strain ATCC 31267 / DSM 46492 / JCM 5070 / NBRC 14893 / NCIMB 12804 / NRRL 8165 / MA-4680) protein is Large ribosomal subunit protein bL33A.